The sequence spans 278 residues: Glutamate racemase (278 aa).

Substrate contacts are provided by residues 25-26 and 57-58; these read DS and YG. The Proton donor/acceptor role is filled by Cys-89. Residue 90–91 coordinates substrate; it reads NT. Cys-204 acts as the Proton donor/acceptor in catalysis. 205-206 contributes to the substrate binding site; sequence TH.

Belongs to the aspartate/glutamate racemases family.

The catalysed reaction is L-glutamate = D-glutamate. It functions in the pathway cell wall biogenesis; peptidoglycan biosynthesis. Its function is as follows. Provides the (R)-glutamate required for cell wall biosynthesis. This Brucella anthropi (strain ATCC 49188 / DSM 6882 / CCUG 24695 / JCM 21032 / LMG 3331 / NBRC 15819 / NCTC 12168 / Alc 37) (Ochrobactrum anthropi) protein is Glutamate racemase.